A 334-amino-acid chain; its full sequence is 3-ketodihydrosphingosine reductase (334 aa).

The signal sequence occupies residues 1-20; that stretch reads MIIYILFSLLAAVIVHLVYK. NADPH is bound by residues Gly36, Ser38, Ser39, Gly40, Arg62, Lys66, Asp100, and Ile101. Positions 36-40 match the GXSXG motif; the sequence is GGSSG. Ser182 (proton donor) is an active-site residue. The Proton acceptor role is filled by Tyr196. Positions 196 and 200 each coordinate NADP(+). Catalysis depends on Lys200, which acts as the Lowers pKa of active site Tyr.

The protein belongs to the short-chain dehydrogenases/reductases (SDR) family.

It localises to the endoplasmic reticulum. The enzyme catalyses sphinganine + NADP(+) = 3-oxosphinganine + NADPH + H(+). The protein operates within lipid metabolism; sphingolipid metabolism. Functionally, catalyzes the reduction of 3'-oxosphinganine (3-ketodihydrosphingosine/KDS) to sphinganine (dihydrosphingosine/DHS), the second step of de novo sphingolipid biosynthesis. The chain is 3-ketodihydrosphingosine reductase (ksrA-1) from Dictyostelium discoideum (Social amoeba).